The chain runs to 211 residues: ATP-dependent Clp protease proteolytic subunit (211 aa).

S114 (nucleophile) is an active-site residue. Residue H139 is part of the active site.

It belongs to the peptidase S14 family. In terms of assembly, fourteen ClpP subunits assemble into 2 heptameric rings which stack back to back to give a disk-like structure with a central cavity, resembling the structure of eukaryotic proteasomes.

It is found in the cytoplasm. It catalyses the reaction Hydrolysis of proteins to small peptides in the presence of ATP and magnesium. alpha-casein is the usual test substrate. In the absence of ATP, only oligopeptides shorter than five residues are hydrolyzed (such as succinyl-Leu-Tyr-|-NHMec, and Leu-Tyr-Leu-|-Tyr-Trp, in which cleavage of the -Tyr-|-Leu- and -Tyr-|-Trp bonds also occurs).. In terms of biological role, cleaves peptides in various proteins in a process that requires ATP hydrolysis. Has a chymotrypsin-like activity. Plays a major role in the degradation of misfolded proteins. This is ATP-dependent Clp protease proteolytic subunit from Pseudomonas fluorescens (strain SBW25).